A 771-amino-acid polypeptide reads, in one-letter code: Ribonucleoside-diphosphate reductase large subunit (771 aa).

The 92-residue stretch at 1 to 92 folds into the ATP-cone domain; it reads MFVIKRNGYK…VSNLHKETKK (92 aa). ATP-binding positions include 5 to 6, 11 to 17, threonine 53, aspartate 57, and lysine 88; these read KR and ENVMFDK. The GDP site is built by serine 202 and serine 217. DTTP-binding positions include 226–228, lysine 243, and arginine 256; that span reads DSI. Asparagine 427 serves as a coordination point for GDP. Residue asparagine 427 is the Proton acceptor of the active site. Cysteine 429 functions as the Cysteine radical intermediate in the catalytic mechanism. GDP-binding positions include glutamate 431 and 603-606; that span reads TAST. The active-site Proton acceptor is glutamate 431.

Belongs to the ribonucleoside diphosphate reductase large chain family. In terms of assembly, interacts with RNR2/OPG047 subunit. The cofactor is Mg(2+).

The catalysed reaction is a 2'-deoxyribonucleoside 5'-diphosphate + [thioredoxin]-disulfide + H2O = a ribonucleoside 5'-diphosphate + [thioredoxin]-dithiol. Functionally, ribonucleoside-diphosphate reductase holoenzyme provides the precursors necessary for viral DNA synthesis. Allows virus growth in non-dividing cells. Catalyzes the biosynthesis of deoxyribonucleotides from the corresponding ribonucleotides. The chain is Ribonucleoside-diphosphate reductase large subunit (OPG080) from Homo sapiens (Human).